Consider the following 941-residue polypeptide: Gamma-aminobutyric acid type B receptor subunit 2 (941 aa).

The first 41 residues, 1-41 (MASPRSSGQPGPPPPPPPPPARLLLLLLLPLLLPLAPGAWG), serve as a signal peptide directing secretion. At 42–483 (WARGAPRPPP…LRKISLPLYS (442 aa)) the chain is on the extracellular side. N-linked (GlcNAc...) asparagine glycosylation is present at N90. Cystine bridges form between C108–C135, C237–C266, and C265–C302. N298, N389, N404, and N453 each carry an N-linked (GlcNAc...) asparagine glycan. The chain crosses the membrane as a helical span at residues 484–504 (ILSALTILGMIMASAFLFFNI). Over 505-522 (KNRNQKLIKMSSPYMNNL) the chain is Cytoplasmic. A helical membrane pass occupies residues 523–543 (IILGGMLSYASIFLFGLDGSF). At 544 to 551 (VSEKTFET) the chain is on the extracellular side. The chain crosses the membrane as a helical span at residues 552-572 (LCTVRTWILTVGYTTAFGAMF). Topologically, residues 573 to 597 (AKTWRVHAIFKNVKMKKKIIKDQKL) are cytoplasmic. Residues 598-618 (LVIVGGMLLIDLCILICWQAV) form a helical membrane-spanning segment. The Extracellular portion of the chain corresponds to 619–654 (DPLRRTVEKYSMEPDPAGRDISIRPLLEHCENTHMT). A helical membrane pass occupies residues 655–675 (IWLGIVYAYKGLLMLFGCFLA). The Cytoplasmic portion of the chain corresponds to 676 to 691 (WETRNVSIPALNDSKY). A helical membrane pass occupies residues 692–712 (IGMSVYNVGIMCIIGAAVSFL). At 713–720 (TRDQPNVQ) the chain is on the extracellular side. The chain crosses the membrane as a helical span at residues 721 to 741 (FCIVALVIIFCSTITLCLVFV). Topologically, residues 742–941 (PKLITLRTNP…PSFRVMVSGL (200 aa)) are cytoplasmic. Positions 763-790 (TQNQKKEDSKTSTSVTSVNQASTSRLEG) are disordered. The span at 773–787 (TSTSVTSVNQASTSR) shows a compositional bias: polar residues. Phosphoserine occurs at positions 776 and 779. Residues 781-819 (NQASTSRLEGLQSENHRLRMKITELDKDLEEVTMQLQDT) are a coiled coil. Phosphothreonine is present on T819. Phosphoserine occurs at positions 884, 893, 913, 916, 920, and 924.

It belongs to the G-protein coupled receptor 3 family. GABA-B receptor subfamily. Heterodimer of GABBR1 and GABBR2. Homodimers may form, but are inactive. Interacts (via C-terminus) with ATF4 (via leucine zipper domain). As to expression, highly expressed in brain, especially in cerebral cortex, thalamus, hippocampus, frontal, occipital and temporal lobe, occipital pole and cerebellum, followed by corpus callosum, caudate nucleus, spinal cord, amygdala and medulla. Weakly expressed in heart, testis and skeletal muscle.

The protein localises to the cell membrane. It localises to the postsynaptic cell membrane. In terms of biological role, component of a heterodimeric G-protein coupled receptor for GABA, formed by GABBR1 and GABBR2. Within the heterodimeric GABA receptor, only GABBR1 seems to bind agonists, while GABBR2 mediates coupling to G proteins. Ligand binding causes a conformation change that triggers signaling via guanine nucleotide-binding proteins (G proteins) and modulates the activity of down-stream effectors, such as adenylate cyclase. Signaling inhibits adenylate cyclase, stimulates phospholipase A2, activates potassium channels, inactivates voltage-dependent calcium-channels and modulates inositol phospholipid hydrolysis. Plays a critical role in the fine-tuning of inhibitory synaptic transmission. Pre-synaptic GABA receptor inhibits neurotransmitter release by down-regulating high-voltage activated calcium channels, whereas postsynaptic GABA receptor decreases neuronal excitability by activating a prominent inwardly rectifying potassium (Kir) conductance that underlies the late inhibitory postsynaptic potentials. Not only implicated in synaptic inhibition but also in hippocampal long-term potentiation, slow wave sleep, muscle relaxation and antinociception. The chain is Gamma-aminobutyric acid type B receptor subunit 2 (GABBR2) from Homo sapiens (Human).